A 230-amino-acid polypeptide reads, in one-letter code: Orotidine 5'-phosphate decarboxylase (230 aa).

Substrate is bound by residues Asp-10, Lys-31, Asp-58–Thr-67, Thr-117, Arg-179, Gln-188, Gly-208, and Arg-209. Lys-60 functions as the Proton donor in the catalytic mechanism.

It belongs to the OMP decarboxylase family. Type 1 subfamily. In terms of assembly, homodimer.

The catalysed reaction is orotidine 5'-phosphate + H(+) = UMP + CO2. It participates in pyrimidine metabolism; UMP biosynthesis via de novo pathway; UMP from orotate: step 2/2. Functionally, catalyzes the decarboxylation of orotidine 5'-monophosphate (OMP) to uridine 5'-monophosphate (UMP). The polypeptide is Orotidine 5'-phosphate decarboxylase (Staphylococcus epidermidis (strain ATCC 12228 / FDA PCI 1200)).